The following is a 312-amino-acid chain: uncharacterized protein (312 aa).

2 consecutive transmembrane segments (helical) span residues 4 to 24 and 286 to 306; these read AIYLLILCIFGLFSVYFTYAE and YLLSFIGIIIGFGIIGLAIYL.

It localises to the cell membrane. This is an uncharacterized protein from Methanocaldococcus jannaschii (strain ATCC 43067 / DSM 2661 / JAL-1 / JCM 10045 / NBRC 100440) (Methanococcus jannaschii).